The chain runs to 217 residues: Octanoyltransferase (217 aa).

In terms of domain architecture, BPL/LPL catalytic spans 32-207 (SDSPDELWIV…TLSQLLGYQQ (176 aa)). Substrate contacts are provided by residues 71-78 (RGGQVTYH), 138-140 (SLG), and 151-153 (GLA). C169 acts as the Acyl-thioester intermediate in catalysis.

It belongs to the LipB family.

The protein localises to the cytoplasm. The enzyme catalyses octanoyl-[ACP] + L-lysyl-[protein] = N(6)-octanoyl-L-lysyl-[protein] + holo-[ACP] + H(+). Its pathway is protein modification; protein lipoylation via endogenous pathway; protein N(6)-(lipoyl)lysine from octanoyl-[acyl-carrier-protein]: step 1/2. Catalyzes the transfer of endogenously produced octanoic acid from octanoyl-acyl-carrier-protein onto the lipoyl domains of lipoate-dependent enzymes. Lipoyl-ACP can also act as a substrate although octanoyl-ACP is likely to be the physiological substrate. The protein is Octanoyltransferase of Shewanella sp. (strain MR-7).